The primary structure comprises 29 residues: Trypsin inhibitor 3 (29 aa).

3 disulfide bridges follow: Cys-3-Cys-20, Cys-10-Cys-22, and Cys-16-Cys-28.

This sequence belongs to the protease inhibitor I7 (squash-type serine protease inhibitor) family.

It is found in the secreted. Inhibits trypsin. The polypeptide is Trypsin inhibitor 3 (Luffa aegyptiaca (Sponge gourd)).